The chain runs to 389 residues: Alpha-2B adrenergic receptor (389 aa).

Residues 1 to 25 (AIAAVITFLILFTIFGNALVILAVL) traverse the membrane as a helical segment. Residues 26–36 (TSRSLRAPQNL) are Cytoplasmic-facing. The helical transmembrane segment at 37–62 (FLVSLAAADILVATLIIPFSLANELL) threads the bilayer. Over 63–72 (GYWYFWRTWC) the chain is Extracellular. Cys72 and Cys151 are oxidised to a cystine. The helical transmembrane segment at 73-95 (EVYLALDVLFCTSSIVHLCAISL) threads the bilayer. Topologically, residues 96-117 (DRYWAVSRALEYNSKRTPRRIK) are cytoplasmic. Residues 118–140 (CIILTVWLIAAAISLPPLIYKGD) traverse the membrane as a helical segment. The Extracellular portion of the chain corresponds to 141–156 (QGPQPRGRPQCMLNQE). A helical membrane pass occupies residues 157–180 (AWYILSSSIGSFFAPCLIMILVYL). Residues 181–353 (RIYLIAKRSN…LTREKRFTFV (173 aa)) are Cytoplasmic-facing. 2 disordered regions span residues 192-218 (RGPR…PLAL) and 231-310 (DGEA…HLQQ). Residues 234-249 (ANGHSKLTGEKERETS) show a composition bias toward basic and acidic residues. The chain crosses the membrane as a helical span at residues 354-377 (LTVVIGVFVLCWFPFFFSYSLGAI). Topologically, residues 378–386 (CPQHCKVPH) are extracellular. The helical transmembrane segment at 387 to 389 (GLF) threads the bilayer.

The protein belongs to the G-protein coupled receptor 1 family. Adrenergic receptor subfamily. ADRA2B sub-subfamily. Interacts with RAB26. Interacts with PPP1R9B.

Its subcellular location is the cell membrane. Functionally, alpha-2 adrenergic receptors mediate the catecholamine-induced inhibition of adenylate cyclase through the action of G proteins. In Procavia capensis habessinica (Abyssinian hyrax), this protein is Alpha-2B adrenergic receptor (ADRA2B).